Here is a 155-residue protein sequence, read N- to C-terminus: Probable ribosome biogenesis protein RLP24 (155 aa).

Belongs to the eukaryotic ribosomal protein eL24 family.

The protein is Probable ribosome biogenesis protein RLP24 (RPL24) of Encephalitozoon cuniculi (strain GB-M1) (Microsporidian parasite).